The chain runs to 78 residues: UPF0335 protein A1E_00570 (78 aa).

Belongs to the UPF0335 family.

In Rickettsia canadensis (strain McKiel), this protein is UPF0335 protein A1E_00570.